The sequence spans 300 residues: tRNA dimethylallyltransferase (300 aa).

An ATP-binding site is contributed by 11–18; it reads GPTAVGKS. Residue 13–18 participates in substrate binding; that stretch reads TAVGKS. The interaction with substrate tRNA stretch occupies residues 35–38; it reads DSVQ.

This sequence belongs to the IPP transferase family. In terms of assembly, monomer. Mg(2+) serves as cofactor.

It carries out the reaction adenosine(37) in tRNA + dimethylallyl diphosphate = N(6)-dimethylallyladenosine(37) in tRNA + diphosphate. Catalyzes the transfer of a dimethylallyl group onto the adenine at position 37 in tRNAs that read codons beginning with uridine, leading to the formation of N6-(dimethylallyl)adenosine (i(6)A). This chain is tRNA dimethylallyltransferase, found in Borrelia hermsii (strain HS1 / DAH).